A 186-amino-acid chain; its full sequence is Calcium-binding protein NCSA (186 aa).

4 consecutive EF-hand domains span residues 40–58 (SGTI…MGVG), 66–93 (LFNV…ITRG), 94–129 (TPEE…MYKL), and 142–177 (DPHD…NPDI). Positions 107, 109, 111, 113, 118, 155, 157, 159, 161, and 166 each coordinate Ca(2+).

The protein belongs to the recoverin family.

Its function is as follows. May prevent cells from entering development prematurely in the presence of environmental nutrients. This is Calcium-binding protein NCSA (ncsA) from Dictyostelium discoideum (Social amoeba).